Reading from the N-terminus, the 209-residue chain is A-type ATP synthase subunit D (209 aa).

It belongs to the V-ATPase D subunit family. In terms of assembly, has multiple subunits, A(3), B(3), C, D, E, F, G, I and K(x); there may be a few other subunits as well.

It localises to the cell membrane. In terms of biological role, component of the A-type ATP synthase that produces ATP from ADP in the presence of a proton gradient across the membrane. The sequence is that of A-type ATP synthase subunit D from Methanosarcina mazei (strain ATCC BAA-159 / DSM 3647 / Goe1 / Go1 / JCM 11833 / OCM 88) (Methanosarcina frisia).